The sequence spans 556 residues: Protein misato homolog 1 (556 aa).

The residue at position 41 (S41) is a Phosphoserine.

This sequence belongs to the misato family.

It is found in the mitochondrion outer membrane. It localises to the cytoplasm. In terms of biological role, involved in the regulation of mitochondrial distribution and morphology. Required for mitochondrial fusion and mitochondrial network formation. This is Protein misato homolog 1 (Msto1) from Mus musculus (Mouse).